A 652-amino-acid chain; its full sequence is MLSWKNDLTPVSDRFDDIYFSPENGLEETRHVFIGGNDLPDRWRNSNIQNPFCILELGFGTGLNFFATWKEYLKQDNRFRLHFISVEKFPLSRKEISKAVSAFPELEEIKEEFLSSYQDLIPGMNYFRFLEGKIHLTLFLGDVSDALCEISGKADAIFLDGFAPSKNPEMWEESVLGNLKNVSKFGTTFSTFTVARTVRNSLSYAGFTLEKRPGFGKKREMLTGKYSNYPSETKESLPKEKPWCKRSDPESQIKTATIIGAGIAGSTLAYSLSKRGIQVFLIDPSGIANETSGIPRAISHPHLTKIPGPISLFTLRAFRYALSFLSSFADKDQFGKVGSFHGVTAEMNPERFRKSIENHKLTEEIASWKPNGSDFHKNDPFNKELEEGVLFRNGFWTRPGSIARKCVDQPGIELIQATANSFERIGSSWKLDLKESDQKVLADSIIFCNSYLIGKLASSLFEGEEIFPINKVRGQLISLKETENSSRVPNILCAEHYLTPSVQGEHVLGSTFDEFDLNPKPRKKDTDLLLQYVQTKYPTLRFDSNCVLSEKTGFRAQTPDRFPIIGPIFDPKIFQETYKEIDLPRNRNKKFPNLKVIPGLYVFGGLGSRGILSSFLGAEILASLILGEPAPVEFSLLESLHPARFLYRRIRK.

A tRNA (mnm(5)s(2)U34)-methyltransferase region spans residues methionine 1–serine 227. Residues isoleucine 259–lysine 652 form an FAD-dependent cmnm(5)s(2)U34 oxidoreductase region.

In the N-terminal section; belongs to the methyltransferase superfamily. tRNA (mnm(5)s(2)U34)-methyltransferase family. It in the C-terminal section; belongs to the DAO family. FAD serves as cofactor.

It is found in the cytoplasm. It carries out the reaction 5-aminomethyl-2-thiouridine(34) in tRNA + S-adenosyl-L-methionine = 5-methylaminomethyl-2-thiouridine(34) in tRNA + S-adenosyl-L-homocysteine + H(+). Catalyzes the last two steps in the biosynthesis of 5-methylaminomethyl-2-thiouridine (mnm(5)s(2)U) at the wobble position (U34) in tRNA. Catalyzes the FAD-dependent demodification of cmnm(5)s(2)U34 to nm(5)s(2)U34, followed by the transfer of a methyl group from S-adenosyl-L-methionine to nm(5)s(2)U34, to form mnm(5)s(2)U34. This chain is tRNA 5-methylaminomethyl-2-thiouridine biosynthesis bifunctional protein MnmC, found in Leptospira borgpetersenii serovar Hardjo-bovis (strain JB197).